The sequence spans 505 residues: Protein amnionless (505 aa).

The first 20 residues, 1–20 (MGLHWQWLIWALVGLHVALA), serve as a signal peptide directing secretion. Topologically, residues 21 to 344 (TKWYGGGMDF…RPYNPNVSFS (324 aa)) are extracellular. A helical transmembrane segment spans residues 345–365 (SIVLILFCMALVGLVSVVILA). Residues 366–505 (HFMPENPYLN…CEADTDEETI (140 aa)) are Cytoplasmic-facing. Residues 451-482 (GALEEAAKESQEQDEILSVPKMETGDLDARSV) form a disordered region. Basic and acidic residues predominate over residues 473–482 (ETGDLDARSV).

As to expression, specifically expressed in nephrocytes.

It localises to the cell membrane. Required in the nephrocyte for normal uptake of proteins and elimination of toxins, and for maintenance of endocytic trafficking structures. May function together with Cubn. The chain is Protein amnionless from Drosophila melanogaster (Fruit fly).